We begin with the raw amino-acid sequence, 62 residues long: Large ribosomal subunit protein uL30 (62 aa).

The protein belongs to the universal ribosomal protein uL30 family. As to quaternary structure, part of the 50S ribosomal subunit.

This Thioalkalivibrio sulfidiphilus (strain HL-EbGR7) protein is Large ribosomal subunit protein uL30.